We begin with the raw amino-acid sequence, 1709 residues long: Intraflagellar transport protein 122 (1709 aa).

2 WD repeats span residues 51-89 and 132-171; these read TQHPLVTCLAISPDGHMVVSMGTDGAVMFNDSTGAALFK and SFKGTPRAIAWAPGSDWFVISTQDGDLVIMTPEGMELNSC. Positions 209-229 are disordered; that stretch reads TIPQTVTPSASASGRSGSGKR. A WD 3 repeat occupies 634–673; the sequence is LHRSPIVSLDISPDRKYISVVDRSDVVSVYKFLDDSEIVL. The stretch at 1231-1256 is one LRR 1 repeat; sequence IEALERLRLSGNTSKEAIIIKQLIDA. Positions 1378-1404 are disordered; the sequence is LSGEDTVKASSQRSKKDNPPSLRSTIG. An LRR 2 repeat occupies 1414-1436; the sequence is LGSLAHIDLGINNMNIPPGISEL.

The protein resides in the cell projection. It is found in the cilium. Its subcellular location is the flagellum. The protein localises to the cytoplasm. It localises to the cytoskeleton. The protein resides in the flagellum axoneme. It is found in the flagellum basal body. Functionally, component of the intraflagellar transport complex A (IFT-A) involved in flagellar assembly. This is Intraflagellar transport protein 122 from Giardia intestinalis (strain ATCC 50803 / WB clone C6) (Giardia lamblia).